A 216-amino-acid polypeptide reads, in one-letter code: Methylthioribulose-1-phosphate dehydratase (216 aa).

The Zn(2+) site is built by histidine 101 and histidine 103.

It belongs to the aldolase class II family. MtnB subfamily. It depends on Zn(2+) as a cofactor.

The enzyme catalyses 5-(methylsulfanyl)-D-ribulose 1-phosphate = 5-methylsulfanyl-2,3-dioxopentyl phosphate + H2O. The protein operates within amino-acid biosynthesis; L-methionine biosynthesis via salvage pathway; L-methionine from S-methyl-5-thio-alpha-D-ribose 1-phosphate: step 2/6. Its function is as follows. Catalyzes the dehydration of methylthioribulose-1-phosphate (MTRu-1-P) into 2,3-diketo-5-methylthiopentyl-1-phosphate (DK-MTP-1-P). The sequence is that of Methylthioribulose-1-phosphate dehydratase from Bradyrhizobium sp. (strain BTAi1 / ATCC BAA-1182).